Consider the following 310-residue polypeptide: Ribosomal RNA small subunit methyltransferase H (310 aa).

Residues 35–37 (GGH), D52, F79, D100, and Q107 contribute to the S-adenosyl-L-methionine site.

It belongs to the methyltransferase superfamily. RsmH family.

It is found in the cytoplasm. The catalysed reaction is cytidine(1402) in 16S rRNA + S-adenosyl-L-methionine = N(4)-methylcytidine(1402) in 16S rRNA + S-adenosyl-L-homocysteine + H(+). Its function is as follows. Specifically methylates the N4 position of cytidine in position 1402 (C1402) of 16S rRNA. The chain is Ribosomal RNA small subunit methyltransferase H from Anaeromyxobacter dehalogenans (strain 2CP-1 / ATCC BAA-258).